A 32-amino-acid polypeptide reads, in one-letter code: ilv operon leader peptide (32 aa).

The sequence is that of ilv operon leader peptide (ilvL) from Yersinia pestis.